A 415-amino-acid polypeptide reads, in one-letter code: Gamma-glutamyl phosphate reductase (415 aa).

It belongs to the gamma-glutamyl phosphate reductase family.

It is found in the cytoplasm. The catalysed reaction is L-glutamate 5-semialdehyde + phosphate + NADP(+) = L-glutamyl 5-phosphate + NADPH + H(+). It functions in the pathway amino-acid biosynthesis; L-proline biosynthesis; L-glutamate 5-semialdehyde from L-glutamate: step 2/2. Functionally, catalyzes the NADPH-dependent reduction of L-glutamate 5-phosphate into L-glutamate 5-semialdehyde and phosphate. The product spontaneously undergoes cyclization to form 1-pyrroline-5-carboxylate. The protein is Gamma-glutamyl phosphate reductase of Thermotoga maritima (strain ATCC 43589 / DSM 3109 / JCM 10099 / NBRC 100826 / MSB8).